The chain runs to 221 residues: MFSELPPSVPTALLQWGWGLHRGPCSIPNFKQVASQHSVQNDFTENSVDANEKFPIGHAGCIEKTKDDYVPFDTLFMVSSIDELGRRQLTDTIRRSLVMNACEITVACTKTAAFSGRGVSRQKHVTLSKNKFNPSSHKSLQMFVLCQKTHAPRVRNLLYESIRARRPRRYYTRSTDGKSRPLVPVFVYEFTALDRVLLHKENTLTDQPINTENSGHGRTRT.

The protein belongs to the alphaherpesvirinae HHV-1 UL3 family. In terms of processing, phosphorylated.

It is found in the host nucleus. The sequence is that of Nuclear phosphoprotein UL3 homolog from Varicella-zoster virus (strain Dumas) (HHV-3).